The sequence spans 385 residues: DNA replication and repair protein RecF (385 aa).

30 to 37 (GPNGFGKT) serves as a coordination point for ATP.

This sequence belongs to the RecF family.

It localises to the cytoplasm. Its function is as follows. The RecF protein is involved in DNA metabolism; it is required for DNA replication and normal SOS inducibility. RecF binds preferentially to single-stranded, linear DNA. It also seems to bind ATP. The sequence is that of DNA replication and repair protein RecF from Mycobacterium marinum (strain ATCC BAA-535 / M).